Here is a 201-residue protein sequence, read N- to C-terminus: Akirin-2 (201 aa).

Ser-18 and Ser-21 each carry phosphoserine. Residues 22–27 carry the Nuclear localization signal motif; the sequence is PKRRRC. Residue Ser-55 is modified to Phosphoserine. The short motif at 198–201 is the SYVS motif element; that stretch reads SYVS.

The protein belongs to the akirin family. In terms of assembly, homodimer. Interacts with IPO9; the interaction is direct. Associates with 20S and 26S proteasomes. Interacts with SMARCD1; promoting SWI/SNF complex recruitment. Interacts with NFKBIZ. Interacts with YWHAB. Post-translationally, polyubiquitinated. Polyubiquitination is dependent of UBR5 that extends pre-ubiquitinated AKIRIN2. Highly expressed in testis, cerebrum and cerebellum, and barely detectable in liver, heart, spleen and muscle. Also highly expressed in various tumor cells from hepatoma, glioblastoma and pheochromocytoma.

Its subcellular location is the nucleus. It localises to the cytoplasm. It is found in the membrane. In terms of biological role, molecular adapter that acts as a bridge between a variety of multiprotein complexes, and which is involved in embryonic development, immunity, myogenesis and brain development. Plays a key role in nuclear protein degradation by promoting import of proteasomes into the nucleus: directly binds to fully assembled 20S proteasomes at one end and to nuclear import receptor IPO9 at the other end, bridging them together and mediating the import of pre-assembled proteasome complexes through the nuclear pore. Involved in innate immunity by regulating the production of interleukin-6 (IL6) downstream of Toll-like receptor (TLR): acts by bridging the NF-kappa-B inhibitor NFKBIZ and the SWI/SNF complex, leading to promote induction of IL6. Also involved in adaptive immunity by promoting B-cell activation. Involved in brain development: required for the survival and proliferation of cerebral cortical progenitor cells. Involved in myogenesis: required for skeletal muscle formation and skeletal development, possibly by regulating expression of muscle differentiation factors. Also plays a role in facilitating interdigital tissue regression during limb development. In Rattus norvegicus (Rat), this protein is Akirin-2.